Reading from the N-terminus, the 116-residue chain is Large ribosomal subunit protein bL19 (116 aa).

It belongs to the bacterial ribosomal protein bL19 family.

Functionally, this protein is located at the 30S-50S ribosomal subunit interface and may play a role in the structure and function of the aminoacyl-tRNA binding site. In Staphylococcus saprophyticus subsp. saprophyticus (strain ATCC 15305 / DSM 20229 / NCIMB 8711 / NCTC 7292 / S-41), this protein is Large ribosomal subunit protein bL19.